The sequence spans 669 residues: DNA ligase (669 aa).

Residue 35-39 (DFEYD) coordinates NAD(+). The tract at residues 52 to 71 (YPEWDSPDSPTHRVGSDKTE) is disordered. A compositionally biased stretch (basic and acidic residues) spans 61-71 (PTHRVGSDKTE). NAD(+) contacts are provided by residues 84–85 (SL) and E115. The active-site N6-AMP-lysine intermediate is the K117. The NAD(+) site is built by R138, E175, K290, and K314. C408, C411, C426, and C432 together coordinate Zn(2+). The BRCT domain occupies 590–669 (AVSNRLAGKT…EEEFLRLIEE (80 aa)).

Belongs to the NAD-dependent DNA ligase family. LigA subfamily. The cofactor is Mg(2+). Mn(2+) is required as a cofactor.

The enzyme catalyses NAD(+) + (deoxyribonucleotide)n-3'-hydroxyl + 5'-phospho-(deoxyribonucleotide)m = (deoxyribonucleotide)n+m + AMP + beta-nicotinamide D-nucleotide.. DNA ligase that catalyzes the formation of phosphodiester linkages between 5'-phosphoryl and 3'-hydroxyl groups in double-stranded DNA using NAD as a coenzyme and as the energy source for the reaction. It is essential for DNA replication and repair of damaged DNA. In Porphyromonas gingivalis (strain ATCC BAA-308 / W83), this protein is DNA ligase.